Reading from the N-terminus, the 298-residue chain is Ribosomal protein uL3 glutamine methyltransferase (298 aa).

It belongs to the protein N5-glutamine methyltransferase family. PrmB subfamily.

The catalysed reaction is L-glutaminyl-[ribosomal protein uL3] + S-adenosyl-L-methionine = N(5)-methyl-L-glutaminyl-[ribosomal protein uL3] + S-adenosyl-L-homocysteine + H(+). Its function is as follows. Methylates large ribosomal subunit protein uL3 on a specific glutamine residue. The sequence is that of Ribosomal protein uL3 glutamine methyltransferase from Bordetella pertussis (strain Tohama I / ATCC BAA-589 / NCTC 13251).